The chain runs to 379 residues: Homoserine O-succinyltransferase (379 aa).

Residues asparagine 51–leucine 360 form the AB hydrolase-1 domain. Serine 157 acts as the Nucleophile in catalysis. Arginine 227 contributes to the substrate binding site. Active-site residues include aspartate 323 and histidine 356. Aspartate 357 provides a ligand contact to substrate.

This sequence belongs to the AB hydrolase superfamily. MetX family. Homodimer.

It localises to the cytoplasm. The enzyme catalyses L-homoserine + succinyl-CoA = O-succinyl-L-homoserine + CoA. Its pathway is amino-acid biosynthesis; L-methionine biosynthesis via de novo pathway; O-succinyl-L-homoserine from L-homoserine: step 1/1. Transfers a succinyl group from succinyl-CoA to L-homoserine, forming succinyl-L-homoserine. The sequence is that of Homoserine O-succinyltransferase from Pseudomonas savastanoi pv. phaseolicola (strain 1448A / Race 6) (Pseudomonas syringae pv. phaseolicola (strain 1448A / Race 6)).